A 356-amino-acid chain; its full sequence is Mitogen-activated protein kinase PMK11 (356 aa).

A Protein kinase domain is found at 24–312 (YDIQDVVGEG…VEEALKHPYL (289 aa)). ATP contacts are provided by residues 30–38 (VGEGAYGVV) and Lys-53.

It belongs to the protein kinase superfamily. CMGC Ser/Thr protein kinase family. MAP kinase subfamily. It depends on Mg(2+) as a cofactor. Phosphorylated by MST7.

It carries out the reaction L-seryl-[protein] + ATP = O-phospho-L-seryl-[protein] + ADP + H(+). The enzyme catalyses L-threonyl-[protein] + ATP = O-phospho-L-threonyl-[protein] + ADP + H(+). Mitogen-activated protein kinase; part of the MST11-MST7-PMK1 MAP kinase (MAPK) cascade that is essential for appressorium formation, penetration and invasive growth. Central regulator of appressorium development that acts downstream of the cAMP signal. The MST11-MST7-PMK1 MAP kinase cascade transduces signals from the cell surface sensors MDB2 and SHO1 that recognize various surface signals such as surface hydrophobicity, cutin monomers, and rice leaf waxes. Regulates expression of secreted fungal effector proteins implicated of host immune defenses, preventing reactive oxygen species generation and excessive callose deposition at plasmodesmata. Furthermore, controls the hyphal constriction required for fungal growth from one rice cell to the neighboring cell, enabling host tissue colonization and blast disease. Targets downstream of the PMK1-MAPK pathway include transcription factor MST12 and pathogenicity-related genes GAS1 and GAS2, both of which are expressed during appressorium formation, even if regulation of MST12 is not associated with expression of GAS1 or GAS2. This is Mitogen-activated protein kinase PMK11 from Pyricularia oryzae (strain 70-15 / ATCC MYA-4617 / FGSC 8958) (Rice blast fungus).